The chain runs to 313 residues: Olfactory receptor 51A2 (313 aa).

Over 1-27 (MSIINTSYVEITTFFLVGMPGLEYAHI) the chain is Extracellular. Asparagine 5 is a glycosylation site (N-linked (GlcNAc...) asparagine). Residues 28-48 (WISIPICSMYLIAILGNGTIL) traverse the membrane as a helical segment. At 49-56 (FIIKTEPS) the chain is on the cytoplasmic side. A helical transmembrane segment spans residues 57-77 (LHGPMYYFLSMLAMSDLGLSL). Residues 78-101 (SSLPTVLSIFLFNAPETSSSACFA) lie on the Extracellular side of the membrane. Cysteine 99 and cysteine 191 are oxidised to a cystine. Residues 102–122 (QEFFIHGFSVLESSVLLIMSF) form a helical membrane-spanning segment. Residues 123 to 141 (DRFLAIHNPLRYTSILTTV) lie on the Cytoplasmic side of the membrane. A helical transmembrane segment spans residues 142-162 (RVAQIGIVFSFKSMLLVLPFP). Residues 163–198 (FTLRSLRYCKKNQLSHSYCLHQDVMKLACSDNRIDV) are Extracellular-facing. A helical membrane pass occupies residues 199-218 (IYGFFGALCLMVDFILIAVS). Topologically, residues 219–238 (YTLILKTVPGIASKKEELKA) are cytoplasmic. The helical transmembrane segment at 239-259 (LNTCVSHICAVIIFYLPIINL) threads the bilayer. The Extracellular segment spans residues 260–274 (AVVHRFAGHVSPLIN). Residues 275–295 (VLMANVLLLVPPLMKPIVYCV) form a helical membrane-spanning segment. Over 296–313 (KTKQIRVRVVAKLCQWKI) the chain is Cytoplasmic.

This sequence belongs to the G-protein coupled receptor 1 family.

It localises to the cell membrane. Functionally, odorant receptor. The sequence is that of Olfactory receptor 51A2 (OR51A2) from Homo sapiens (Human).